A 415-amino-acid chain; its full sequence is MSWLIIADDLSGAADCAIGYAMSGARTVVTLEAAPAGADLSQADVVACDVDSRRMAPQEAAARNLEAWHRGQGASRRLYKKIDSTLRGNWAAETAALAPLAGLAIVAPAFPATGRTTAGGCMFVNGQPLEDSDIWRLEALTGRADLVALLAARGLRATLLPLDTVRAGDATLRLTIAGLAREGVRAVVCDAQTEQDLAALAAATAQLDVPAFWVGSGGLARALAAPCLFEGGAPQPLPAPEGGPVLTLVGSLSGISGRQAACLRERTGMQSLVVPPRILREGAGHADWDAAQQSITGCLRAGRDLLVSIGRDDAFDPGEGPRLSAALAQLSLPGFQHTRGLIATGGETARAMLSAAGIGALMLRREVEPGVPLSDTPALPGVPARRVATKAGAFGSEAALWHAWQAMTESRAPSA.

Substrate contacts are provided by residues aspartate 9, arginine 53, and 81 to 84 (KIDS). ATP is bound by residues serine 251, 345 to 348 (GGET), and glycine 392.

The protein belongs to the four-carbon acid sugar kinase family.

It carries out the reaction D-threonate + ATP = 4-O-phospho-D-threonate + ADP + H(+). Catalyzes the ATP-dependent phosphorylation of D-threonate to D-threonate 4-phosphate. Can also phosphorylate 4-hydroxy-L-threonine, with lower efficiency. The sequence is that of D-threonate kinase from Cupriavidus necator (strain ATCC 17699 / DSM 428 / KCTC 22496 / NCIMB 10442 / H16 / Stanier 337) (Ralstonia eutropha).